The sequence spans 257 residues: UPF0246 protein BAV2675 (257 aa).

This sequence belongs to the UPF0246 family.

The protein is UPF0246 protein BAV2675 of Bordetella avium (strain 197N).